The primary structure comprises 508 residues: Probable zinc metalloprotease MCYG_04217 (508 aa).

N-linked (GlcNAc...) asparagine glycosylation is present at N111. The Zn(2+) site is built by H182, D202, and E238. An N-linked (GlcNAc...) asparagine glycan is attached at N253. D265 contacts Zn(2+). Residues 422–508 (MPRNVRVDTS…ERGVAVLPFP (87 aa)) form the Fibronectin type-III domain. N-linked (GlcNAc...) asparagine glycosylation occurs at N435.

This sequence belongs to the peptidase M28 family. M28B subfamily. The cofactor is Zn(2+).

Its subcellular location is the secreted. This chain is Probable zinc metalloprotease MCYG_04217, found in Arthroderma otae (strain ATCC MYA-4605 / CBS 113480) (Microsporum canis).